Consider the following 218-residue polypeptide: Ribose-5-phosphate isomerase A (218 aa).

Substrate-binding positions include 28 to 31 (TGST), 81 to 84 (DGAD), and 94 to 97 (KGGG). Residue E103 is the Proton acceptor of the active site. Residue K121 coordinates substrate.

It belongs to the ribose 5-phosphate isomerase family. As to quaternary structure, homodimer.

The catalysed reaction is aldehydo-D-ribose 5-phosphate = D-ribulose 5-phosphate. The protein operates within carbohydrate degradation; pentose phosphate pathway; D-ribose 5-phosphate from D-ribulose 5-phosphate (non-oxidative stage): step 1/1. Its function is as follows. Catalyzes the reversible conversion of ribose-5-phosphate to ribulose 5-phosphate. The polypeptide is Ribose-5-phosphate isomerase A (Vibrio cholerae serotype O1 (strain ATCC 39541 / Classical Ogawa 395 / O395)).